Here is an 87-residue protein sequence, read N- to C-terminus: Beta-toxin Ct1a (87 aa).

The signal sequence occupies residues 1-19; it reads MNSLLMITACLALIGTVWA. An LCN-type CS-alpha/beta domain is found at 20–85; that stretch reads KEGYLVNHST…VWPLPKKTCN (66 aa). 4 disulfides stabilise this stretch: Cys-31–Cys-84, Cys-35–Cys-60, Cys-44–Cys-65, and Cys-48–Cys-67. Asn-85 is modified (asparagine amide).

It belongs to the long (4 C-C) scorpion toxin superfamily. Sodium channel inhibitor family. Beta subfamily. As to expression, expressed by the venom gland.

The protein resides in the secreted. Functionally, beta toxins bind voltage-independently at site-4 of sodium channels (Nav) and shift the voltage of activation toward more negative potentials thereby affecting sodium channel activation and promoting spontaneous and repetitive firing. Is lethal to mice but does not show toxicity to freshwater shrimp and crickets. In Centruroides tecomanus (Scorpion), this protein is Beta-toxin Ct1a.